The chain runs to 400 residues: CinA-like protein (400 aa).

This sequence belongs to the CinA family.

The chain is CinA-like protein from Shigella flexneri.